We begin with the raw amino-acid sequence, 217 residues long: tRNA (guanine-N(7)-)-methyltransferase (217 aa).

Residues glutamate 48, glutamate 73, asparagine 100, and aspartate 123 each contribute to the S-adenosyl-L-methionine site. Aspartate 123 is a catalytic residue. The substrate site is built by lysine 127 and aspartate 159.

Belongs to the class I-like SAM-binding methyltransferase superfamily. TrmB family.

The catalysed reaction is guanosine(46) in tRNA + S-adenosyl-L-methionine = N(7)-methylguanosine(46) in tRNA + S-adenosyl-L-homocysteine. It functions in the pathway tRNA modification; N(7)-methylguanine-tRNA biosynthesis. Its function is as follows. Catalyzes the formation of N(7)-methylguanine at position 46 (m7G46) in tRNA. This chain is tRNA (guanine-N(7)-)-methyltransferase, found in Leptospira interrogans serogroup Icterohaemorrhagiae serovar copenhageni (strain Fiocruz L1-130).